Reading from the N-terminus, the 667-residue chain is Cysteine-rich receptor-like protein kinase 11 (667 aa).

An N-terminal signal peptide occupies residues 1-24 (MKQRSLFSVLCFFFISFGVASVSA). Gnk2-homologous domains follow at residues 25–129 (QTCT…NTSF) and 135–248 (LNPR…LYTY). Over 25–292 (QTCTTDKGTF…SKGISAGVVV (268 aa)) the chain is Extracellular. 7 N-linked (GlcNAc...) asparagine glycosylation sites follow: Asn-37, Asn-54, Asn-64, Asn-106, Asn-126, Asn-150, and Asn-254. Positions 259 to 268 (SPPPEPPVTV) are enriched in pro residues. The tract at residues 259 to 282 (SPPPEPPVTVPQPAGDQDNPTNND) is disordered. A glycan (N-linked (GlcNAc...) asparagine) is linked at Asn-281. Residues 293–313 (AITVPTVIAILILLVLGFVLF) traverse the membrane as a helical segment. The Cytoplasmic portion of the chain corresponds to 314–667 (RRRKSYQRTK…YTSKSSSFSS (354 aa)). The Protein kinase domain maps to 350–629 (FSTSNKLGEG…IILMLTSNTI (280 aa)). ATP-binding positions include 356–364 (LGEGGFGAV) and Lys-378. Phosphotyrosine is present on Tyr-423. Asp-475 functions as the Proton acceptor in the catalytic mechanism. Ser-479 carries the post-translational modification Phosphoserine. At Thr-515 the chain carries Phosphothreonine. Tyr-523 is subject to Phosphotyrosine.

Belongs to the protein kinase superfamily. Ser/Thr protein kinase family. CRK subfamily. Detected in root, stem, leaf and flower.

Its subcellular location is the membrane. The catalysed reaction is L-seryl-[protein] + ATP = O-phospho-L-seryl-[protein] + ADP + H(+). It carries out the reaction L-threonyl-[protein] + ATP = O-phospho-L-threonyl-[protein] + ADP + H(+). This Arabidopsis thaliana (Mouse-ear cress) protein is Cysteine-rich receptor-like protein kinase 11 (CRK11).